We begin with the raw amino-acid sequence, 248 residues long: ATP synthase subunit a (248 aa).

Helical transmembrane passes span 29 to 49 (AMLTTCVSLSFFLFLFYCLFS), 85 to 105 (VFPFLFVIFSFILISNVQGLV), 115 to 135 (LIQTMVLALTVFIGVIIIVLA), 143 to 163 (LFLPGGTSIVLAFLLVPIEIV), 176 to 196 (LFANMMAGHTLLKVIAAVAWA), 201 to 221 (GGLLLIAHIVPLGVLVILFGL), and 227 to 247 (LIQAYVFTILSCIYINDAIVL).

It belongs to the ATPase A chain family. F-type ATPases have 2 components, CF(1) - the catalytic core - and CF(0) - the membrane proton channel. CF(1) has five subunits: alpha(3), beta(3), gamma(1), delta(1), epsilon(1). CF(0) has three main subunits: a, b and c.

The protein resides in the mitochondrion inner membrane. Its function is as follows. Mitochondrial membrane ATP synthase (F(1)F(0) ATP synthase or Complex V) produces ATP from ADP in the presence of a proton gradient across the membrane which is generated by electron transport complexes of the respiratory chain. F-type ATPases consist of two structural domains, F(1) - containing the extramembraneous catalytic core and F(0) - containing the membrane proton channel, linked together by a central stalk and a peripheral stalk. During catalysis, ATP synthesis in the catalytic domain of F(1) is coupled via a rotary mechanism of the central stalk subunits to proton translocation. Key component of the proton channel; it may play a direct role in the translocation of protons across the membrane. In Pylaiella littoralis (Seaweed), this protein is ATP synthase subunit a (ATP6).